Here is a 692-residue protein sequence, read N- to C-terminus: Elongation factor G (692 aa).

Positions 8–282 constitute a tr-type G domain; that stretch reads EKVRNIGIAA…AVVDYLPAPT (275 aa). GTP-binding positions include 17–24, 81–85, and 135–138; these read AHIDAGKT, DTPGH, and NKMD.

Belongs to the TRAFAC class translation factor GTPase superfamily. Classic translation factor GTPase family. EF-G/EF-2 subfamily.

The protein resides in the cytoplasm. In terms of biological role, catalyzes the GTP-dependent ribosomal translocation step during translation elongation. During this step, the ribosome changes from the pre-translocational (PRE) to the post-translocational (POST) state as the newly formed A-site-bound peptidyl-tRNA and P-site-bound deacylated tRNA move to the P and E sites, respectively. Catalyzes the coordinated movement of the two tRNA molecules, the mRNA and conformational changes in the ribosome. In Trichormus variabilis (strain ATCC 29413 / PCC 7937) (Anabaena variabilis), this protein is Elongation factor G.